The following is a 234-amino-acid chain: uncharacterized protein (234 aa).

Residues 212–234 (GKHLKLDSNTTENKTTKQNETGG) form a disordered region. A compositionally biased stretch (low complexity) spans 220 to 234 (NTTENKTTKQNETGG).

This is an uncharacterized protein from Methanothermobacter thermautotrophicus (Methanobacterium thermoformicicum).